Reading from the N-terminus, the 665-residue chain is MALLKVAPSRLLSRALQLTSTLQNCTATSIAARRNFHFTVYGRKDTSAKVSDSISTQYPVVDHDFDAVVVGAGGAGLRAAFGLSEAGFNTACITKLFPTRSHTVAAQGGINAALGNMEDDDWRWHFYDTVKGSDWLGDQDAIHYMTEQAPASVIELENYGMPFSRTEQGKIYQRAFGGQSLKYGKGGQAHRCCCVADRTGHSLLHTLYGRSLRYDTSYFVEYFALDLLMENGECRGVIALCMEDGSIHRFRAKNTVIATGGYGRTYFSCTSAHTCTGDGTAMVTRAGLPCQDLEFVQFHPTGIYGAGCLITEGCRGEGGILINSEGERFMERYAPVAKDLASRDVVSRSMTIEMREGRGCGKDKDHVYLQLHHLPPSQLASRLPGISETAMIFAGVDVTKEPIPVLPTVHYNMGGIPTNYKGQVITHVNGEDRVVPGLYACGEAASASVHGANRLGANSLLDLVVFGRACALSIAEECKPGEALPSIKENAGEESVANLDKLRFANGSTRTSELRLNMQKTMQTHAAVFRTGSVLKEGCEKLSVINSAMDDLKTFDRGIVWNTDVVETLELQNLMLCALQTINSAEARKESRGAHAREDYKTRIDEYDYSKPIQGQQKKSFSEHWRKHTLSYVDSKGKVSLEYRPVIDATLNEDCASVPPAIRSY.

Residues 1–45 constitute a mitochondrion transit peptide; the sequence is MALLKVAPSRLLSRALQLTSTLQNCTATSIAARRNFHFTVYGRKD. Ala-72, Ala-75, Thr-94, Lys-95, and Ser-101 together coordinate FAD. His-102 bears the Tele-8alpha-FAD histidine mark. 4 residues coordinate FAD: Thr-103, Gly-108, Ala-224, and Asp-278. Residues His-299, Arg-343, and His-410 each contribute to the oxaloacetate site. Catalysis depends on Arg-343, which acts as the Proton acceptor. Glu-443 serves as a coordination point for FAD. Positions 454 and 457 each coordinate oxaloacetate. The FAD site is built by Ser-459 and Leu-460.

This sequence belongs to the FAD-dependent oxidoreductase 2 family. FRD/SDH subfamily. In terms of assembly, component of complex II composed of four subunits: a flavoprotein (FP), an iron-sulfur protein (IP), and a cytochrome b composed of a large and a small subunit. FAD is required as a cofactor.

Its subcellular location is the mitochondrion inner membrane. It carries out the reaction a ubiquinone + succinate = a ubiquinol + fumarate. The catalysed reaction is (R)-malate + a quinone = enol-oxaloacetate + a quinol. The enzyme catalyses (S)-malate + a quinone = enol-oxaloacetate + a quinol. It participates in carbohydrate metabolism; tricarboxylic acid cycle; fumarate from succinate (eukaryal route): step 1/1. Enol-oxaloacetate inhibits the succinate dehydrogenase activity. Its function is as follows. Flavoprotein (FP) subunit of succinate dehydrogenase (SDH) that is involved in complex II of the mitochondrial electron transport chain and is responsible for transferring electrons from succinate to ubiquinone (coenzyme Q). SDH also oxidizes malate to the non-canonical enol form of oxaloacetate, enol-oxaloacetate. Enol-oxaloacetate, which is a potent inhibitor of the succinate dehydrogenase activity, is further isomerized into keto-oxaloacetate. This is Succinate dehydrogenase [ubiquinone] flavoprotein subunit B, mitochondrial (sdha-b) from Xenopus laevis (African clawed frog).